Here is a 53-residue protein sequence, read N- to C-terminus: Lupus La protein homolog (53 aa).

A compositionally biased stretch (basic and acidic residues) spans 1–13; it reads GKVEFQGKKTKFD. Residues 1–53 are disordered; sequence GKVEFQGKKTKFDSDDERNENGAAGPVKRAREETDKEEPASKQQKTENGAGDQ. N6-acetyllysine is present on K8. Position 10 is a phosphothreonine (T10). S14 is modified (phosphoserine). A compositionally biased stretch (basic and acidic residues) spans 29–40; it reads RAREETDKEEPA.

Interacts with DDX15. May interact with RUFY1. Post-translationally, phosphorylated.

It localises to the nucleus. Functionally, binds to the 3' poly(U) terminus of nascent RNA polymerase III transcripts, protecting them from exonuclease digestion and facilitating their folding and maturation. This chain is Lupus La protein homolog (SSB), found in Oryctolagus cuniculus (Rabbit).